Consider the following 205-residue polypeptide: Thymidylate kinase (205 aa).

11 to 18 serves as a coordination point for ATP; the sequence is GVEGAGKS.

The protein belongs to the thymidylate kinase family.

It catalyses the reaction dTMP + ATP = dTDP + ADP. Functionally, phosphorylation of dTMP to form dTDP in both de novo and salvage pathways of dTTP synthesis. This Vesicomyosocius okutanii subsp. Calyptogena okutanii (strain HA) protein is Thymidylate kinase.